The chain runs to 400 residues: Plasminogen activator inhibitor 1 (400 aa).

The N-terminal stretch at 1–21 is a signal peptide; that stretch reads MQMSTVCLALGLALVFGEASA. Residues Asn-230, Asn-286, and Asn-350 are each glycosylated (N-linked (GlcNAc...) asparagine).

The protein belongs to the serpin family. As to quaternary structure, forms a heterodimer with TMPRSS7. Interacts with VTN. Binds LRP1B; binding is followed by internalization and degradation. Interacts with PPP1CB. In complex with PLAU/uPA, interacts with PLAUR/uPAR. Interacts with SORL1 and LRP1, either alone or in complex with PLAU; these interactions are abolished in the presence of LRPAP1/RAP. The ternary complex composed of PLAUR-PLAU-PAI1 also interacts with SORL1. Interacts with PLAT/tPA. Also interacts with SORL1, when complexed to PLAT/tPA.

It localises to the secreted. In terms of biological role, serine protease inhibitor. Inhibits TMPRSS7. Is a primary inhibitor of tissue-type plasminogen activator (PLAT) and urokinase-type plasminogen activator (PLAU). As PLAT inhibitor, it is required for fibrinolysis down-regulation and is responsible for the controlled degradation of blood clots. As PLAU inhibitor, it is involved in the regulation of cell adhesion and spreading. Acts as a regulator of cell migration, independently of its role as protease inhibitor. It is required for stimulation of keratinocyte migration during cutaneous injury repair. It is involved in cellular and replicative senescence. Plays a role in alveolar type 2 cells senescence in the lung. Is involved in the regulation of cementogenic differentiation of periodontal ligament stem cells, and regulates odontoblast differentiation and dentin formation during odontogenesis. In Neovison vison (American mink), this protein is Plasminogen activator inhibitor 1 (SERPINE1).